An 821-amino-acid chain; its full sequence is Cell wall integrity transcriptional regulator CAS5 (821 aa).

Disordered regions lie at residues 42–66 (HLQSLQQQSQVQSQAPQQVQSLNQH), 219–245 (FESPQSHIQSQPSYSQGYHNQNSLSTP), 305–432 (TKSN…STSQ), 544–576 (QEEEQEHQDEQMEIDSFESNEKNARPTLSTSSL), and 607–750 (VKQE…KHKC). The span at 222–245 (PQSHIQSQPSYSQGYHNQNSLSTP) shows a compositional bias: polar residues. Residues 305–318 (TKSNSTSSYNSTLN) are compositionally biased toward low complexity. Residues 319 to 329 (PFYTPSQQLSS) show a composition bias toward polar residues. Over residues 372–387 (QLRKAKSYTSLLRKKK) the composition is skewed to basic residues. The segment covering 396–412 (QNQQHQQQQQQQQQQQQ) has biased composition (low complexity). Positions 422-432 (QNLSFPNSTSQ) are enriched in polar residues. The segment covering 545–561 (EEEQEHQDEQMEIDSFE) has biased composition (acidic residues). 2 stretches are compositionally biased toward low complexity: residues 662 to 674 (LVNKGNKTNNNDT) and 684 to 693 (KNTNGNGNND). A compositionally biased stretch (acidic residues) spans 694–714 (NDNDSEENNDNVDDADDDDDG). 2 consecutive C2H2-type zinc fingers follow at residues 748–770 (HKCPICESRFQRPEHVKRHLKSH) and 776–801 (FECQMPNCGKRFNRKDNLKAHLKKIH). Residue Ser-769 is modified to Phosphoserine.

In terms of processing, phosphorylation at Ser-769 and probably additional serine residues. GLC7 dephosphorylates CAS5 in response to cell wall stress which leads to its translocation to the nucleus.

The protein resides in the nucleus. It is found in the cytoplasm. In terms of biological role, transcription factor that acts with ADA2 to promote cell wall integrity. Regulates the expression of target genes in concert with the transcriptional regulators SWI4 and SWI6. Crucial for proper cell cycle dynamics and responses to echinocandins, which inhibit beta-1,3-glucan synthesis. Has distinct transcriptional targets under basal and stress conditions. Also regulates a transcriptional network that influences the response to fluconazole. Plays a key role in adherence, hyphal development, and virulence. Acts as a repressor of hypha-specific genes during yeast-form growth. The chain is Cell wall integrity transcriptional regulator CAS5 from Candida albicans (strain SC5314 / ATCC MYA-2876) (Yeast).